Consider the following 240-residue polypeptide: Venom hemolysin-like protein 1 (240 aa).

An N-terminal signal peptide occupies residues 1–18 (MQYKLILLVVGLFQASLA). The tract at residues 25–50 (ESVPHPSKDVAPPDTQDSSTQTEVTT) is disordered. A compositionally biased stretch (polar residues) spans 39–50 (TQDSSTQTEVTT).

In terms of tissue distribution, expressed by the venom gland (anterior main gland) (at protein level).

It is found in the secreted. This chain is Venom hemolysin-like protein 1, found in Platymeris rhadamanthus (Red spot assassin bug).